We begin with the raw amino-acid sequence, 142 residues long: Transcriptional regulator MraZ (142 aa).

SpoVT-AbrB domains follow at residues 5 to 47 and 76 to 119; these read EFTH…PLNE and ATDC…SAER.

This sequence belongs to the MraZ family. Forms oligomers.

It is found in the cytoplasm. The protein resides in the nucleoid. The chain is Transcriptional regulator MraZ from Limosilactobacillus reuteri (strain DSM 20016) (Lactobacillus reuteri).